The following is a 492-amino-acid chain: MLDTGLLLVVILASLSVMLLVSLWQQKIRGRLPPGPTPLPFIGNYLQLNTKDVYSSITQLSERYGPVFTIHLGPRRVVVLYGYDAVKEALVDQAEEFSGRGEQATYNTLFKGYGVAFSSGERAKQLRRLSIATLRDFGVGKRGVEERILEEAGYLIKMLQGTCGAPIDPTIYLSKTVSNVISSIVFGERFDYEDTEFLSLLQMMGQMNRFAASPTGQLYDMFHSVMKYLPGPQQQIIKVTQKLEDFMIEKVRQNHSTLDPNSPRNFIDSFLIRMQEEKNGNSEFHMKNLVMTTLSLFFAGSETVSSTLRYGFLLLMKHPDVEAKVHEEIEQVIGRNRQPQYEDHMKMPYTQAVINEIQRFSNLAPLGIPRRIIKNTTFRGFFLPKGTDVFPILGSLMTDPKFFPSPKDFDPQNFLDDKGQLKKNAAFLPFSTGKRFCLGDGLAKMELFLLLTTILQNFRFKFPMKLEDINESPKPLGFTRIIPKYTMSFMPI.

Serine 130 bears the Phosphoserine mark. Cysteine 437 lines the heme pocket.

Belongs to the cytochrome P450 family. Heme serves as cofactor. Liver and testis.

The protein resides in the endoplasmic reticulum membrane. The protein localises to the microsome membrane. It catalyses the reaction an organic molecule + reduced [NADPH--hemoprotein reductase] + O2 = an alcohol + oxidized [NADPH--hemoprotein reductase] + H2O + H(+). Functionally, highly active in the 7-alpha-hydroxylation of testosterone, progesterone and androstenedione. The polypeptide is Cytochrome P450 2A1 (Cyp2a1) (Rattus norvegicus (Rat)).